Here is a 306-residue protein sequence, read N- to C-terminus: MATELRCPDSMPCHNQQVNSASTQNPEPQQAGDLILAHAGGNSDSAATLTLLSGHAHSSVPAELDPQASGGATFNSENNGGTGNYDAPASDSLLGDCEISRQIGAQLKLLPMNDQIRELQTIIRDKTASRGDFMFSADRLIRLVVEEGLNQLPYEECMVTTPTGFKYEGVKFEKGNCGVSIMRSGEAMEQGLRDCCRSIRIGKILIQSDEETQRAKVYYAKFPPDIYRRKVLLMYPILSTGNTVIEAVKVLIEHGVQPSVIILLSLFSTPHGAKSIIQEFPEITILTTEVHPVAPTHFGQKYFGTD.

Disordered regions lie at residues 1-28 (MATE…NPEP) and 58-87 (SSVP…NYDA). Polar residues-rich tracts occupy residues 13-28 (CHNQ…NPEP) and 70-79 (GGATFNSENN). GTP contacts are provided by residues arginine 130, arginine 139, and 173 to 176 (EKGN). Arginine 183 contacts 5-phospho-alpha-D-ribose 1-diphosphate. The GTP site is built by arginine 200 and arginine 229. A 5-phospho-alpha-D-ribose 1-diphosphate-binding site is contributed by 235-243 (YPILSTGNT). Residue 296 to 298 (THF) participates in uracil binding.

The protein belongs to the UPRTase family.

It is found in the cytoplasm. It localises to the nucleus. The sequence is that of Uracil phosphoribosyltransferase homolog (UPRT) from Bos taurus (Bovine).